The primary structure comprises 228 residues: MDSRMEIDFMDLNSKPKLSEMEKQHKKVSGMKWPFSLADLATHHEHTFFQNYKSTPIVSINSKNSSLNNYKSTIDPQYFRGTFPLLAKTSTYDSRKNYDNLSPNESTLTIFYMGEVHIFPGISPEKAELIIDLVSKSTTLHMDEILEKVMNKEKYEENKSDPSNASTNYAKGALAMARRATLARFLEKRKHRLIKARPYLYGENLSKFPFDIQQQEEETASSSVHWEN.

A Tify domain is found at 101-136 (LSPNESTLTIFYMGEVHIFPGISPEKAELIIDLVSK). The Jas signature appears at 176 to 199 (MARRATLARFLEKRKHRLIKARPY). The short motif at 177 to 184 (ARRATLAR) is the Nuclear localization signal element.

Belongs to the TIFY/JAZ family. In terms of assembly, interacts with MYC2 (via N-terminus). JAZ7 competes with MED25 for binding to MYC2. Interacts with MTB1 (via N-terminus).

The protein localises to the nucleus. Functionally, repressor of jasmonate responses. This chain is Protein JAZ7, found in Solanum lycopersicum (Tomato).